We begin with the raw amino-acid sequence, 287 residues long: 3-methyl-2-oxobutanoate hydroxymethyltransferase (287 aa).

Residues Asp-57 and Asp-96 each coordinate Mg(2+). Residues 57 to 58, Asp-96, and Lys-125 each bind 3-methyl-2-oxobutanoate; that span reads DS. Glu-127 contacts Mg(2+). The active-site Proton acceptor is Glu-194.

It belongs to the PanB family. As to quaternary structure, homodecamer; pentamer of dimers. It depends on Mg(2+) as a cofactor.

Its subcellular location is the cytoplasm. It carries out the reaction 3-methyl-2-oxobutanoate + (6R)-5,10-methylene-5,6,7,8-tetrahydrofolate + H2O = 2-dehydropantoate + (6S)-5,6,7,8-tetrahydrofolate. Its pathway is cofactor biosynthesis; (R)-pantothenate biosynthesis; (R)-pantoate from 3-methyl-2-oxobutanoate: step 1/2. Its function is as follows. Catalyzes the reversible reaction in which hydroxymethyl group from 5,10-methylenetetrahydrofolate is transferred onto alpha-ketoisovalerate to form ketopantoate. The polypeptide is 3-methyl-2-oxobutanoate hydroxymethyltransferase (Methylobacterium sp. (strain 4-46)).